We begin with the raw amino-acid sequence, 200 residues long: Imidazole glycerol phosphate synthase subunit HisH (200 aa).

The 198-residue stretch at 3–200 (DVALIDAGGA…LHNFLEMSFP (198 aa)) folds into the Glutamine amidotransferase type-1 domain. Cys-78 (nucleophile) is an active-site residue. Residues His-179 and Glu-181 contribute to the active site.

In terms of assembly, heterodimer of HisH and HisF.

It localises to the cytoplasm. The enzyme catalyses 5-[(5-phospho-1-deoxy-D-ribulos-1-ylimino)methylamino]-1-(5-phospho-beta-D-ribosyl)imidazole-4-carboxamide + L-glutamine = D-erythro-1-(imidazol-4-yl)glycerol 3-phosphate + 5-amino-1-(5-phospho-beta-D-ribosyl)imidazole-4-carboxamide + L-glutamate + H(+). The catalysed reaction is L-glutamine + H2O = L-glutamate + NH4(+). The protein operates within amino-acid biosynthesis; L-histidine biosynthesis; L-histidine from 5-phospho-alpha-D-ribose 1-diphosphate: step 5/9. Its function is as follows. IGPS catalyzes the conversion of PRFAR and glutamine to IGP, AICAR and glutamate. The HisH subunit catalyzes the hydrolysis of glutamine to glutamate and ammonia as part of the synthesis of IGP and AICAR. The resulting ammonia molecule is channeled to the active site of HisF. The polypeptide is Imidazole glycerol phosphate synthase subunit HisH (Xanthomonas oryzae pv. oryzae (strain MAFF 311018)).